Reading from the N-terminus, the 181-residue chain is MKHLVASSILGVFVLTPSLAMMNIRFNHPLYGSFGTQIIHIGAFQGMVSIRDNNIFSEWDGILDYKNALLVAKVFNKMACVLARMDKAVFPSLDDISKALDKQAFKYYPSTRGLTYTVLPSWVKNLAQYGKPIKNMCRDDPTYFAQQQKEGTALAIDSNSCFEIQLLSFMGLFICGETPGL.

The first 20 residues, 1–20 (MKHLVASSILGVFVLTPSLA), serve as a signal peptide directing secretion. Residues 53-145 (NNIFSEWDGI…MCRDDPTYFA (93 aa)) enclose the BRICHOS domain. A disulfide bridge links Cys-80 with Cys-137.

It belongs to the gastrokine family.

It localises to the secreted. Functionally, may inhibit gastric epithelial cell proliferation. The sequence is that of Gastrokine-3 (GKN3P) from Homo sapiens (Human).